The primary structure comprises 168 residues: HTH-type transcriptional regulator IscR (168 aa).

Residues 2–131 form the HTH rrf2-type domain; the sequence is KLTSKGRYAV…NNITLGELMK (130 aa). A DNA-binding region (H-T-H motif) is located at residues 28–51; it reads LADISERQGISLSYLEQLFSKLRK. [2Fe-2S] cluster is bound by residues cysteine 92, cysteine 98, and cysteine 104.

[2Fe-2S] cluster is required as a cofactor.

Its function is as follows. Regulates the transcription of several operons and genes involved in the biogenesis of Fe-S clusters and Fe-S-containing proteins. The protein is HTH-type transcriptional regulator IscR of Vibrio campbellii (strain ATCC BAA-1116).